The primary structure comprises 293 residues: HTH-type transcriptional regulator HdfR (293 aa).

An HTH lysR-type domain is found at 1 to 58 (MDTELLKTFLEVSRTRHFGRAAESLYLTQSAVSFRIRQLENQLGANLFTRHRNNIRLT). A DNA-binding region (H-T-H motif) is located at residues 18 to 37 (FGRAAESLYLTQSAVSFRIR).

The protein belongs to the LysR transcriptional regulatory family.

Its function is as follows. Negatively regulates the transcription of the flagellar master operon flhDC by binding to the upstream region of the operon. This is HTH-type transcriptional regulator HdfR from Yersinia pseudotuberculosis serotype O:1b (strain IP 31758).